A 476-amino-acid chain; its full sequence is ATP synthase subunit beta (476 aa).

An ATP-binding site is contributed by G154 to T161.

The protein belongs to the ATPase alpha/beta chains family. F-type ATPases have 2 components, CF(1) - the catalytic core - and CF(0) - the membrane proton channel. CF(1) has five subunits: alpha(3), beta(3), gamma(1), delta(1), epsilon(1). CF(0) has three main subunits: a(1), b(2) and c(9-12). The alpha and beta chains form an alternating ring which encloses part of the gamma chain. CF(1) is attached to CF(0) by a central stalk formed by the gamma and epsilon chains, while a peripheral stalk is formed by the delta and b chains.

It localises to the cell inner membrane. The catalysed reaction is ATP + H2O + 4 H(+)(in) = ADP + phosphate + 5 H(+)(out). Its function is as follows. Produces ATP from ADP in the presence of a proton gradient across the membrane. The catalytic sites are hosted primarily by the beta subunits. This chain is ATP synthase subunit beta, found in Nitrobacter hamburgensis (strain DSM 10229 / NCIMB 13809 / X14).